Here is a 71-residue protein sequence, read N- to C-terminus: Sec-independent protein translocase protein TatA (71 aa).

A helical transmembrane segment spans residues methionine 1–glycine 21. The segment at lysine 40–lysine 71 is disordered. Basic and acidic residues predominate over residues lysine 61–lysine 71.

It belongs to the TatA/E family. The Tat system comprises two distinct complexes: a TatABC complex, containing multiple copies of TatA, TatB and TatC subunits, and a separate TatA complex, containing only TatA subunits. Substrates initially bind to the TatABC complex, which probably triggers association of the separate TatA complex to form the active translocon.

The protein localises to the cell inner membrane. Functionally, part of the twin-arginine translocation (Tat) system that transports large folded proteins containing a characteristic twin-arginine motif in their signal peptide across membranes. TatA could form the protein-conducting channel of the Tat system. This Allorhizobium ampelinum (strain ATCC BAA-846 / DSM 112012 / S4) (Agrobacterium vitis (strain S4)) protein is Sec-independent protein translocase protein TatA.